We begin with the raw amino-acid sequence, 390 residues long: S-adenosylmethionine:tRNA ribosyltransferase-isomerase (390 aa).

Residues 1–22 (MTQPLSQDQHDSSSNMPTDNAE) form a disordered region.

It belongs to the QueA family. In terms of assembly, monomer.

It is found in the cytoplasm. It carries out the reaction 7-aminomethyl-7-carbaguanosine(34) in tRNA + S-adenosyl-L-methionine = epoxyqueuosine(34) in tRNA + adenine + L-methionine + 2 H(+). It participates in tRNA modification; tRNA-queuosine biosynthesis. Its function is as follows. Transfers and isomerizes the ribose moiety from AdoMet to the 7-aminomethyl group of 7-deazaguanine (preQ1-tRNA) to give epoxyqueuosine (oQ-tRNA). This chain is S-adenosylmethionine:tRNA ribosyltransferase-isomerase, found in Psychrobacter sp. (strain PRwf-1).